Reading from the N-terminus, the 780-residue chain is Lon protease (780 aa).

In terms of domain architecture, Lon N-terminal spans 11–204 (IPVLPLRDVV…RLMAIMESEI (194 aa)). 356–363 (GPPGVGKT) is a binding site for ATP. The Lon proteolytic domain occupies 592–773 (KNQIGQVIGL…KEVLNLSLEN (182 aa)). Catalysis depends on residues S679 and K722.

The protein belongs to the peptidase S16 family. In terms of assembly, homohexamer. Organized in a ring with a central cavity.

It localises to the cytoplasm. It catalyses the reaction Hydrolysis of proteins in presence of ATP.. Its function is as follows. ATP-dependent serine protease that mediates the selective degradation of mutant and abnormal proteins as well as certain short-lived regulatory proteins. Required for cellular homeostasis and for survival from DNA damage and developmental changes induced by stress. Degrades polypeptides processively to yield small peptide fragments that are 5 to 10 amino acids long. Binds to DNA in a double-stranded, site-specific manner. This chain is Lon protease, found in Buchnera aphidicola subsp. Baizongia pistaciae (strain Bp).